Consider the following 186-residue polypeptide: MLILLDQDGVLADFEHAFIDAWRKRHPDIEPVAFKDRKSFHIREDYAPELRGLAEAIYTAPGFIRDLPPVPGAIEAFRELLALGMDVRICSSPLMQFENCVAEKYLWVERHLGREATQRLILTRDKTLVQGDLLIDDRPVITGAARPRWRHIIYDAPYNRDQTDRPRLDWRNWRNVLAGELYRSDA.

Aspartate 6 acts as the Nucleophile in catalysis. Aspartate 6, aspartate 8, and aspartate 137 together coordinate Mg(2+). The active-site Proton donor is aspartate 8.

The protein belongs to the 5'(3')-deoxyribonucleotidase family. Mg(2+) serves as cofactor.

Dephosphorylates the 5' and 2'(3')-phosphates of deoxyribonucleotides. The chain is Putative 5'(3')-deoxyribonucleotidase from Bordetella bronchiseptica (strain ATCC BAA-588 / NCTC 13252 / RB50) (Alcaligenes bronchisepticus).